The following is a 328-amino-acid chain: Trans-O-hydroxybenzylidenepyruvate hydratase-aldolase (328 aa).

The protein belongs to the DapA family. Homotrimer.

It catalyses the reaction (3E)-4-(2-hydroxyphenyl)-2-oxobut-3-enoate + H2O = salicylaldehyde + pyruvate. It functions in the pathway aromatic compound metabolism; naphthalene degradation. Its activity is regulated as follows. Inhibited bye p-chloromercuribenzoate and salicylaldehyde. Activated by salicylate. In terms of biological role, involved in the naphthalene and naphthalenesulfonate catabolic pathway. Catalyzes the transformation of trans-O-hydroxybenzylidenepyruvate (THBPA) to salicylaldehyde and pyruvate. The reaction is reversible. Can also use 2,4-dihydroxybenzalpyruvate (2,4-DHBP) and 2,6-dihydroxybenzalpyruvate (2,6-DHBP). This is Trans-O-hydroxybenzylidenepyruvate hydratase-aldolase (nsaE) from Sphingobium xenophagum.